Reading from the N-terminus, the 981-residue chain is uncharacterized protein (981 aa).

Disordered regions lie at residues 65 to 133 (NIDN…SNNS), 149 to 463 (SSNS…NKIE), 491 to 580 (SNNI…DSPL), 592 to 834 (EQTN…LNQV), and 861 to 891 (VQNDTNSSPISQQLSTSSSPFKSTGGSNDGN). Positions 75 to 88 (SSDDDDDDDDDDDY) are enriched in acidic residues. Low complexity-rich tracts occupy residues 89–133 (NNNN…SNNS), 149–158 (SSNSINNNDN), and 170–181 (SAKTTSSLTSSK). The segment covering 182 to 195 (RSLDSRNRNRDRSY) has biased composition (basic and acidic residues). Residues 196–206 (TRSRSRSRSRS) show a composition bias toward basic residues. A compositionally biased stretch (low complexity) spans 207 to 227 (YSRGFSSLSRSRSRSRSISSR). Positions 228-269 (SRSRSRSRRSRSRSSRSRSRSRSKSKSKSRRSRSRSRSRRSR) are enriched in basic residues. The segment covering 270–292 (SRSDSRSRSDSRGRSRSRSDSRK) has biased composition (basic and acidic residues). The segment covering 314–358 (SSKRHQNSRKRNRSYSRSRTRSWSRSRTRSRSRRRYGGRTFRSPR) has biased composition (basic residues). The segment covering 359–452 (RSRDDSRDRG…SQSPHNEKNK (94 aa)) has biased composition (basic and acidic residues). The segment covering 491–553 (SNNINNNNIK…SHNNTNGNVN (63 aa)) has biased composition (low complexity). Composition is skewed to polar residues over residues 554 to 576 (GVSKTTSSPASDNSTPENISTDL) and 605 to 622 (ESNNNGNDRFKTKCSSTE). The span at 623–634 (NENKNRENEKNN) shows a compositional bias: basic and acidic residues. 2 stretches are compositionally biased toward low complexity: residues 635-820 (SENS…NNNS) and 867-891 (SSPISQQLSTSSSPFKSTGGSNDGN).

This is an uncharacterized protein from Dictyostelium discoideum (Social amoeba).